The chain runs to 102 residues: NADH-quinone oxidoreductase subunit K (102 aa).

3 helical membrane-spanning segments follow: residues 5–25 (LSHY…GIFL), 31–51 (IVIL…MVAF), and 65–85 (LFIL…LVVF).

The protein belongs to the complex I subunit 4L family. In terms of assembly, NDH-1 is composed of 14 different subunits. Subunits NuoA, H, J, K, L, M, N constitute the membrane sector of the complex.

Its subcellular location is the cell inner membrane. It catalyses the reaction a quinone + NADH + 5 H(+)(in) = a quinol + NAD(+) + 4 H(+)(out). NDH-1 shuttles electrons from NADH, via FMN and iron-sulfur (Fe-S) centers, to quinones in the respiratory chain. The immediate electron acceptor for the enzyme in this species is believed to be ubiquinone. Couples the redox reaction to proton translocation (for every two electrons transferred, four hydrogen ions are translocated across the cytoplasmic membrane), and thus conserves the redox energy in a proton gradient. The polypeptide is NADH-quinone oxidoreductase subunit K (Agrobacterium fabrum (strain C58 / ATCC 33970) (Agrobacterium tumefaciens (strain C58))).